Consider the following 150-residue polypeptide: uncharacterized protein (150 aa).

One can recognise a Rhodanese domain in the interval 19-93 (GAQDYVLVDV…SSKRLALRES (75 aa)).

This is an uncharacterized protein from Synechococcus elongatus.